A 509-amino-acid polypeptide reads, in one-letter code: Meiotically up-regulated gene 157 protein (509 aa).

The next 5 membrane-spanning stretches (helical) occupy residues 4–24, 140–160, 296–316, 368–388, and 417–437; these read WQAI…NIPW, LATL…QFPY, ACVL…LSHL, ILFM…LGFV, and ISGI…SLIV.

It is found in the endoplasmic reticulum membrane. Has a role in meiosis. The chain is Meiotically up-regulated gene 157 protein (mug157) from Schizosaccharomyces pombe (strain 972 / ATCC 24843) (Fission yeast).